Here is a 285-residue protein sequence, read N- to C-terminus: Shikimate dehydrogenase (NADP(+)) (285 aa).

Shikimate contacts are provided by residues 20-22 (SIS) and Ser-67. The active-site Proton acceptor is Lys-71. 2 residues coordinate shikimate: Asn-92 and Asp-107. Residues 129–133 (GAGGA) and Ile-227 each bind NADP(+). Tyr-229 provides a ligand contact to shikimate. An NADP(+)-binding site is contributed by Gly-250.

The protein belongs to the shikimate dehydrogenase family. In terms of assembly, homodimer.

It catalyses the reaction shikimate + NADP(+) = 3-dehydroshikimate + NADPH + H(+). It functions in the pathway metabolic intermediate biosynthesis; chorismate biosynthesis; chorismate from D-erythrose 4-phosphate and phosphoenolpyruvate: step 4/7. Its function is as follows. Involved in the biosynthesis of the chorismate, which leads to the biosynthesis of aromatic amino acids. Catalyzes the reversible NADPH linked reduction of 3-dehydroshikimate (DHSA) to yield shikimate (SA). The polypeptide is Shikimate dehydrogenase (NADP(+)) (Streptococcus thermophilus (strain ATCC BAA-491 / LMD-9)).